Reading from the N-terminus, the 1416-residue chain is DNA-directed RNA polymerase subunit beta' (1416 aa).

4 residues coordinate Zn(2+): cysteine 60, cysteine 62, cysteine 75, and cysteine 78. Aspartate 449, aspartate 451, and aspartate 453 together coordinate Mg(2+). Residues cysteine 781, cysteine 855, cysteine 862, and cysteine 865 each coordinate Zn(2+).

This sequence belongs to the RNA polymerase beta' chain family. In terms of assembly, the RNAP catalytic core consists of 2 alpha, 1 beta, 1 beta' and 1 omega subunit. When a sigma factor is associated with the core the holoenzyme is formed, which can initiate transcription. It depends on Mg(2+) as a cofactor. The cofactor is Zn(2+).

The catalysed reaction is RNA(n) + a ribonucleoside 5'-triphosphate = RNA(n+1) + diphosphate. Its function is as follows. DNA-dependent RNA polymerase catalyzes the transcription of DNA into RNA using the four ribonucleoside triphosphates as substrates. The polypeptide is DNA-directed RNA polymerase subunit beta' (Treponema pallidum (strain Nichols)).